A 1677-amino-acid chain; its full sequence is LTIALVGSQQTKYEPSFSGSKTYQYKYEGVILTGLPEKGLARAGLKVHCKVEISEVAQKTYLLKILNPEIQEYNGIWPKAPFYPASKLTQALASQLTQPIKFQYRNGQVGDIFASEDVSDTVLNIQRGILNMLQLTIKTTQNVYGLQENGIAGICEASYVIQEDRKANKIIVTKSKDLNNCNEKIKMDIGMAYSHTCSNCRKIRKNTRGTAAYTYILKPTDTGTLITQATSQEVHQLTPFNEMTGAAITEARQKLVLEDAKVIHVTVPEQELKNRGSIQYQFASEILQTPIQLFKTRSPETKIKEVLQHLVQNNQQQVQSDAPSKFLQLTQLLRACTHENIEGIWRQYEKTQLYRRWILDALPAAATPTAFRFITQRIMKRDLTDAEAIQTLVTAMHLVQTNHQIVQMAAELVFDRANLKCPVLRKHAVLAYGSMVNRYCAETLNCREEALKPLHDFANDAISRAHEEETVLALKALGNAGQPSSIKRIQKCLPGFSSGASQLPVKIQVDAVMALRNIAKKEPGKVQELTMQLFMDHQLHSEVRMVASMVLLETRPSMALVATLAEALLKETSLQVASFTYSHMKAITRSTAPENHALSSACNVAVKLLSRKLDRLSYRYSKAMHMDTFKYPLMAGAAANIHIINNAASILPSAVVMKFQAYILSATADPLEIGLHTEGLQEVLMQNHEHIDQMPSAGKIQQIMKMLSGWKSVPSEKTLASAYIKLFGQEISFSRLDKKTIQEALQAVREPVERQTVIKRVVNQLERGAAAQLSKPLLVAEVRRILPTCIGLPMEMSLYVSAVTTADINVQAHITPSPTNDFNVAQLLNSNIVLHTDVTPSIAMHTIAVMGINTHVIQTGVELHVKARTTVPMKFTAKIDLKEKNFKIESEPCQQETEVLSLSAQAFAISRNVEDLDAAKKNPLLPEEAVRNILNEQFNSGTEDSNERERAGKFARPSAEMMSQELMNSGEHQNRKGAHATRSACAKAKNFGFEVCFEGKSENVAFLRDSPLYKIIGQHHCKIALKPSHSSEATIEKIQLELQTGNKAASKIIRVVAMQSLAEADEMKGNILKKLNKLLTVDGETQDSTLRGFKRRSSSSSSSSSSSSSSSSSSSSSSSQQSRMEKRMEQDKLTENLERDRDHMRGKQSKNKKQEWKNKQKKHHKQLPSSSSSSSSSSSGSNSSSSSSSSSSSSSRSHNHRNNTRTLSKSKRYQNNNNSSSSSGSSSSSEEIQKNPEIFAYRFRSHRDKLGFQNKRGRMSSSSSSSSSSSSQSTLNSKQDAKFLGDSSPPIFAFVARAVRSDGLQQGYQVAAYTDNRVSRPRVQLLATEIIEKSRWQICADAILASNYKAMALMRWGEECQDYKVAVSAVTGRLASHPSLQIKAKWSRIPRAAKQTQNILAEYVPGAAFMLGFSQKEQRNPSKQFKIILAVTSPNTIDTLIKAPKITLFKQAVQIPVQIPMEPSDAERRSPGLASIMNEIPFLIEEATKSKCVAQENKFITFDGVKFSYQMPGGCYHILAQDCRSKVRFMVMLKQASMSKNLRAVNAKIYNKDIDILPTTKGSVRLLINNNEIPLSQLPFTDSSGNIHIKRADEGVSVSAQQYGLESLYFDGKTVQVKVTSEMRGKTCGLCGHNDGERRKEFRMPDGRQARGPSVSPTPGLCLEKTATEAASFCVIM.

The N-terminal stretch at 1–8 (LTIALVGS) is a signal peptide. Residues 17-655 (FSGSKTYQYK…NAASILPSAV (639 aa)) enclose the Vitellogenin domain. Disordered stretches follow at residues 1089–1232 (TLRG…SEEI) and 1252–1280 (FQNKRGRMSSSSSSSSSSSSQSTLNSKQD). The segment covering 1098–1122 (SSSSSSSSSSSSSSSSSSSSSSQQS) has biased composition (low complexity). The segment covering 1123-1145 (RMEKRMEQDKLTENLERDRDHMR) has biased composition (basic and acidic residues). Positions 1169–1196 (SSSSSSSSSSSGSNSSSSSSSSSSSSSR) are enriched in low complexity. Residues Asn1182, Asn1202, Asn1217, and Asn1218 are each glycosylated (N-linked (GlcNAc...) asparagine). A compositionally biased stretch (basic residues) spans 1197 to 1212 (SHNHRNNTRTLSKSKR). Low complexity-rich tracts occupy residues 1215-1229 (NNNNSSSSSGSSSSS) and 1260-1273 (SSSSSSSSSSSSQS). Positions 1490 to 1675 (SKCVAQENKF…TATEAASFCV (186 aa)) constitute a VWFD domain. Cystine bridges form between Cys1492–Cys1631 and Cys1515–Cys1674. Over residues 1636–1649 (GERRKEFRMPDGRQ) the composition is skewed to basic and acidic residues. The interval 1636 to 1659 (GERRKEFRMPDGRQARGPSVSPTP) is disordered.

Post-translationally, phosvitin, an egg yolk storage protein, is one of the most highly phosphorylated (10%) proteins in nature. Found in liver, testis and undifferentiated gonads of estrogen-treated fish. Not detected in the brain and spleen.

Precursor of the major egg-yolk proteins that are sources of nutrients during early development of oviparous organisms. This Acipenser transmontanus (White sturgeon) protein is Vitellogenin.